Reading from the N-terminus, the 501-residue chain is Cytochrome P450 4d2 (501 aa).

Residues glutamate 311 and cysteine 449 each contribute to the heme site.

The protein belongs to the cytochrome P450 family. Requires heme as cofactor.

The protein localises to the endoplasmic reticulum membrane. It is found in the microsome membrane. Involved in the metabolism of insect hormones and in the breakdown of synthetic insecticides. In Drosophila melanogaster (Fruit fly), this protein is Cytochrome P450 4d2 (Cyp4d2).